Here is a 217-residue protein sequence, read N- to C-terminus: Phosphate-specific transport system accessory protein PhoU homolog 2 (217 aa).

This sequence belongs to the PhoU family. In terms of assembly, homodimer.

It is found in the cytoplasm. Plays a role in the regulation of phosphate uptake. The sequence is that of Phosphate-specific transport system accessory protein PhoU homolog 2 from Methanothermobacter thermautotrophicus (strain ATCC 29096 / DSM 1053 / JCM 10044 / NBRC 100330 / Delta H) (Methanobacterium thermoautotrophicum).